A 163-amino-acid polypeptide reads, in one-letter code: MTIDEIYQMYMNDVYRFLLSMTKDKHLAEDLLQETFMRAYIHIHSYDHSKVKPWLFQVARNAFIDYVRKHKKEVTISDDLIGSLFQNAVQSPAHQVEIKEVLTGYMSELPDNYREALTLYYLKELNYKEASHIMNISEANFKSVLFRARQRLKALYNRGVNDE.

The Polymerase core binding signature appears at aspartate 30–isoleucine 43. The H-T-H motif DNA-binding region spans tyrosine 127–phenylalanine 146.

It belongs to the sigma-70 factor family. ECF subfamily. As to quaternary structure, interacts with the N-terminus of YhdL, which is probably its anti-sigma factor. Interacts transiently with the RNAP core.

Functionally, sigma factors are initiation factors that promote the attachment of RNA polymerase (RNAP) to specific initiation sites and are then released. Extracytoplasmic function (ECF) sigma factors are held in an inactive form by a cognate anti-sigma factor (YhdL) until released. This sigma factor is involved in the maintenance of membrane and cell wall integrity in response to environmental stresses including salt, acid, ethanol and antibiotics stress. Partially regulates transcription from a number of genes including disA. Associates with RNAP core under all growth phases. The polypeptide is ECF RNA polymerase sigma factor SigM (sigM) (Bacillus subtilis (strain 168)).